A 352-amino-acid chain; its full sequence is Peptide chain release factor 1 (352 aa).

An N5-methylglutamine modification is found at glutamine 233. The disordered stretch occupies residues 288–309 (NAKDRKEQVGSGDRSERIRTYN). Positions 289–306 (AKDRKEQVGSGDRSERIR) are enriched in basic and acidic residues.

Belongs to the prokaryotic/mitochondrial release factor family. Methylated by PrmC. Methylation increases the termination efficiency of RF1.

The protein localises to the cytoplasm. In terms of biological role, peptide chain release factor 1 directs the termination of translation in response to the peptide chain termination codons UAG and UAA. In Helicobacter pylori (strain Shi470), this protein is Peptide chain release factor 1.